Here is a 265-residue protein sequence, read N- to C-terminus: Small ribosomal subunit protein uS3 (265 aa).

In terms of domain architecture, KH type-2 spans 39–107; that stretch reads VRDFLKKKLK…PVHVNIEEIR (69 aa). Residues 211–265 are disordered; it reads NDAPVVEEPQDDRRRRPGRPEGRRREGEGRPGGNRRGGAGAGRRAAPGADAKSGE. Residues 221 to 239 show a composition bias toward basic and acidic residues; it reads DDRRRRPGRPEGRRREGEG. The span at 240-251 shows a compositional bias: gly residues; it reads RPGGNRRGGAGA.

It belongs to the universal ribosomal protein uS3 family. In terms of assembly, part of the 30S ribosomal subunit. Forms a tight complex with proteins S10 and S14.

In terms of biological role, binds the lower part of the 30S subunit head. Binds mRNA in the 70S ribosome, positioning it for translation. This Cupriavidus necator (strain ATCC 17699 / DSM 428 / KCTC 22496 / NCIMB 10442 / H16 / Stanier 337) (Ralstonia eutropha) protein is Small ribosomal subunit protein uS3.